The chain runs to 116 residues: Tachykinin-3 (116 aa).

The N-terminal stretch at 1–20 (MRSAMLFAAVLALSLAWTFG) is a signal peptide. Residues 21–79 (AACEEPQEQGGRLSKDSDLSLLPPPLLRRLYDSRSISLEGLLKVLSKASVGPKETSLPQ) constitute a propeptide that is removed on maturation. Position 91 is a methionine amide (methionine 91). The segment at 92-116 (GKRNSQPDTPADVVEENTPSFGVLK) is disordered. The propeptide occupies 95 to 116 (NSQPDTPADVVEENTPSFGVLK).

This sequence belongs to the tachykinin family.

The protein resides in the secreted. Tachykinins are active peptides which excite neurons, evoke behavioral responses, are potent vasodilators and secretagogues, and contract (directly or indirectly) many smooth muscles. Is a critical central regulator of gonadal function. This chain is Tachykinin-3 (Tac3), found in Rattus norvegicus (Rat).